We begin with the raw amino-acid sequence, 245 residues long: 1-(5-phosphoribosyl)-5-[(5-phosphoribosylamino)methylideneamino] imidazole-4-carboxamide isomerase (245 aa).

Asp-8 (proton acceptor) is an active-site residue. Catalysis depends on Asp-131, which acts as the Proton donor.

It belongs to the HisA/HisF family.

It is found in the cytoplasm. It carries out the reaction 1-(5-phospho-beta-D-ribosyl)-5-[(5-phospho-beta-D-ribosylamino)methylideneamino]imidazole-4-carboxamide = 5-[(5-phospho-1-deoxy-D-ribulos-1-ylimino)methylamino]-1-(5-phospho-beta-D-ribosyl)imidazole-4-carboxamide. Its pathway is amino-acid biosynthesis; L-histidine biosynthesis; L-histidine from 5-phospho-alpha-D-ribose 1-diphosphate: step 4/9. The polypeptide is 1-(5-phosphoribosyl)-5-[(5-phosphoribosylamino)methylideneamino] imidazole-4-carboxamide isomerase (Neisseria gonorrhoeae (strain NCCP11945)).